A 199-amino-acid chain; its full sequence is Shikimate kinase (199 aa).

Residue 34-39 (GAGKTA) coordinates ATP. Threonine 38 contacts Mg(2+). The substrate site is built by aspartate 56, arginine 80, and glycine 102. Position 140 (arginine 140) interacts with ATP. Arginine 159 is a substrate binding site.

Belongs to the shikimate kinase family. Monomer. Mg(2+) serves as cofactor.

It is found in the cytoplasm. It carries out the reaction shikimate + ATP = 3-phosphoshikimate + ADP + H(+). The protein operates within metabolic intermediate biosynthesis; chorismate biosynthesis; chorismate from D-erythrose 4-phosphate and phosphoenolpyruvate: step 5/7. Catalyzes the specific phosphorylation of the 3-hydroxyl group of shikimic acid using ATP as a cosubstrate. The protein is Shikimate kinase of Cereibacter sphaeroides (strain ATCC 17023 / DSM 158 / JCM 6121 / CCUG 31486 / LMG 2827 / NBRC 12203 / NCIMB 8253 / ATH 2.4.1.) (Rhodobacter sphaeroides).